We begin with the raw amino-acid sequence, 169 residues long: Endoribonuclease YbeY (169 aa).

Zn(2+) contacts are provided by His-128, His-132, and His-138.

Belongs to the endoribonuclease YbeY family. The cofactor is Zn(2+).

The protein localises to the cytoplasm. Single strand-specific metallo-endoribonuclease involved in late-stage 70S ribosome quality control and in maturation of the 3' terminus of the 16S rRNA. This chain is Endoribonuclease YbeY, found in Cyanothece sp. (strain PCC 7425 / ATCC 29141).